The primary structure comprises 509 residues: Putative thymidine phosphorylase (509 aa).

This sequence belongs to the thymidine/pyrimidine-nucleoside phosphorylase family. Type 2 subfamily.

The enzyme catalyses thymidine + phosphate = 2-deoxy-alpha-D-ribose 1-phosphate + thymine. This chain is Putative thymidine phosphorylase, found in Chelativorans sp. (strain BNC1).